The primary structure comprises 118 residues: Small ribosomal subunit protein uS13 (118 aa).

The disordered stretch occupies residues 94-118; that stretch reads SLPLRGQRTKTNARTRKGPRKPIKK.

The protein belongs to the universal ribosomal protein uS13 family. As to quaternary structure, part of the 30S ribosomal subunit. Forms a loose heterodimer with protein S19. Forms two bridges to the 50S subunit in the 70S ribosome.

Functionally, located at the top of the head of the 30S subunit, it contacts several helices of the 16S rRNA. In the 70S ribosome it contacts the 23S rRNA (bridge B1a) and protein L5 of the 50S subunit (bridge B1b), connecting the 2 subunits; these bridges are implicated in subunit movement. Contacts the tRNAs in the A and P-sites. This Vibrio parahaemolyticus serotype O3:K6 (strain RIMD 2210633) protein is Small ribosomal subunit protein uS13.